The chain runs to 649 residues: Acid beta-fructofuranosidase (649 aa).

Residues 1-22 are Cytoplasmic-facing; that stretch reads MEHHKPLLPTSSHAAPTSSTRK. A propeptide spans 1–101 (removed in mature form); that stretch reads MEHHKPLLPT…NLLFAGEGGA (101 aa). Residues 23–43 form a helical; Signal-anchor for type II membrane protein membrane-spanning segment; sequence DLLFVLCGLLFLSSLVAYGGY. Residues 44 to 649 are Lumenal-facing; it reads RASGVPHAHL…PFPFNPDQKS (606 aa). The disordered stretch occupies residues 52-75; that stretch reads HLSSPTSNHQQDHQSPTSLPSSKW. Residues 54–72 show a composition bias toward polar residues; the sequence is SSPTSNHQQDHQSPTSLPS. Substrate contacts are provided by residues 127–130, Q146, W154, and 189–190; these read WMND and WT. Residue D130 is part of the active site. An N-linked (GlcNAc...) (complex) asparagine glycan is attached at N210. 253 to 254 contributes to the substrate binding site; that stretch reads RD. N275 carries N-linked (GlcNAc...) (complex) asparagine glycosylation. Positions 308 and 341 each coordinate substrate. C498 and C546 form a disulfide bridge. N618 carries an N-linked (GlcNAc...) (high mannose) asparagine glycan.

This sequence belongs to the glycosyl hydrolase 32 family. As to quaternary structure, present in two forms, a 70 kDa monomer and a heterodimer of the 30 kDa and 38 kDa subunits. The ratio of the levels of the two forms within cells appears to be regulated developmentally.

The protein localises to the membrane. It localises to the vacuole lumen. The catalysed reaction is Hydrolysis of terminal non-reducing beta-D-fructofuranoside residues in beta-D-fructofuranosides.. It participates in glycan biosynthesis; sucrose metabolism. Functionally, possible role in the continued mobilization of sucrose to sink organs. This is Acid beta-fructofuranosidase (INVA) from Vigna radiata var. radiata (Mung bean).